Reading from the N-terminus, the 353-residue chain is Inactive metacaspase-4 (353 aa).

A lipid anchor (N-myristoyl glycine) is attached at glycine 2.

This sequence belongs to the peptidase C14B family. Palmitoylated. In terms of processing, proteolytic cleavage by MCA3 occurs prior or during secretion and requires MCA4 membrane localization. Cleavage is dispensable for secretion and parasite growth and virulence in the mammalian host. In vitro, can be cleaved by MCA2 but specifically cleaved by MCA3 in vivo.

The protein resides in the cell projection. The protein localises to the cilium. Its subcellular location is the flagellum membrane. It is found in the secreted. Functionally, inactive metacaspase which plays a role in parasite bloodstream form growth and in parasite virulence within the mammalian host. The polypeptide is Inactive metacaspase-4 (Trypanosoma brucei brucei).